We begin with the raw amino-acid sequence, 380 residues long: Cytochrome b (380 aa).

Transmembrane regions (helical) follow at residues 33-53, 77-98, 113-133, and 178-198; these read FGSLLGLCLIAQILTGLFLAM, WLIRNFHANGASFFFICLYLHV, WNIGVVLLLLVMMTAFVGYVL, and FFAFHFLFPFIIAAMVILHLL. Residues H83 and H97 each contribute to the heme b site. The heme b site is built by H182 and H196. Residue H201 participates in a ubiquinone binding. The next 4 helical transmembrane spans lie at 226–246, 288–308, 320–340, and 347–367; these read YKDLFGFVILLLALSVLALFS, LGGVLALLASILILMVVPLLH, LTQILFWTLVADVAILTWIGG, and FITVGQVASVLYFALFLIFIP.

The protein belongs to the cytochrome b family. The cytochrome bc1 complex contains 3 respiratory subunits (MT-CYB, CYC1 and UQCRFS1), 2 core proteins (UQCRC1 and UQCRC2) and probably 6 low-molecular weight proteins. Heme b is required as a cofactor.

Its subcellular location is the mitochondrion inner membrane. In terms of biological role, component of the ubiquinol-cytochrome c reductase complex (complex III or cytochrome b-c1 complex) that is part of the mitochondrial respiratory chain. The b-c1 complex mediates electron transfer from ubiquinol to cytochrome c. Contributes to the generation of a proton gradient across the mitochondrial membrane that is then used for ATP synthesis. This is Cytochrome b (mt-cyb) from Neocyttus rhomboidalis (Spiky oreo dory).